Reading from the N-terminus, the 367-residue chain is tRNA-specific 2-thiouridylase MnmA (367 aa).

ATP-binding positions include 12–19 and M38; that span reads GMSGGVDS. The interval 98-100 is interaction with target base in tRNA; it reads NPD. The active-site Nucleophile is C103. A disulfide bridge connects residues C103 and C200. G128 contributes to the ATP binding site. The interaction with tRNA stretch occupies residues 150–152; the sequence is KDQ. Residue C200 is the Cysteine persulfide intermediate of the active site. Residues 312–313 form an interaction with tRNA region; it reads RY.

Belongs to the MnmA/TRMU family. In terms of assembly, interacts with TusE.

The protein localises to the cytoplasm. It carries out the reaction S-sulfanyl-L-cysteinyl-[protein] + uridine(34) in tRNA + AH2 + ATP = 2-thiouridine(34) in tRNA + L-cysteinyl-[protein] + A + AMP + diphosphate + H(+). Functionally, catalyzes the 2-thiolation of uridine at the wobble position (U34) of tRNA(Lys), tRNA(Glu) and tRNA(Gln), leading to the formation of s(2)U34, the first step of tRNA-mnm(5)s(2)U34 synthesis. Sulfur is provided by IscS, via a sulfur-relay system. Binds ATP and its substrate tRNAs. In Photorhabdus laumondii subsp. laumondii (strain DSM 15139 / CIP 105565 / TT01) (Photorhabdus luminescens subsp. laumondii), this protein is tRNA-specific 2-thiouridylase MnmA.